Reading from the N-terminus, the 695-residue chain is Elongation factor G 1 (695 aa).

Positions 6-281 (TRYRNIGIFA…AVVDYLPNPK (276 aa)) constitute a tr-type G domain. GTP-binding positions include 15–22 (AHVDAGKT), 79–83 (DTPGH), and 133–136 (NKLD).

Belongs to the TRAFAC class translation factor GTPase superfamily. Classic translation factor GTPase family. EF-G/EF-2 subfamily.

It localises to the cytoplasm. Functionally, catalyzes the GTP-dependent ribosomal translocation step during translation elongation. During this step, the ribosome changes from the pre-translocational (PRE) to the post-translocational (POST) state as the newly formed A-site-bound peptidyl-tRNA and P-site-bound deacylated tRNA move to the P and E sites, respectively. Catalyzes the coordinated movement of the two tRNA molecules, the mRNA and conformational changes in the ribosome. The chain is Elongation factor G 1 (fusA) from Synechocystis sp. (strain ATCC 27184 / PCC 6803 / Kazusa).